We begin with the raw amino-acid sequence, 737 residues long: Angiotensin-converting enzyme-like protein Ace3 (737 aa).

Residues 1-23 (MNLPWALLLVLLSHRQLLPWLRT) form the signal peptide. The Extracellular portion of the chain corresponds to 24–639 (VGETSLNDFY…TDTEPEQAYL (616 aa)). A Peptidase M2 domain is found at 32–611 (FYSEAQAKLF…VKQGDTLGWP (580 aa)). An intrachain disulfide couples Cys-146 to Cys-152. Chloride is bound by residues Arg-180 and Tyr-218. A disulfide bond links Cys-346 and Cys-364. Zn(2+)-binding residues include His-377 and His-381. N-linked (GlcNAc...) asparagine glycosylation is present at Asn-390. Zn(2+) is bound at residue Glu-405. Trp-479, Arg-483, and Arg-516 together coordinate chloride. The cysteines at positions 532 and 544 are disulfide-linked. Residues 640–660 (GQWVLLSMSFFMLVLILALGF) traverse the membrane as a helical segment. At 661-700 (RLHYLEKQLLDEDTMILKTLPYSYFLGIAMEPHQAARKQW) the chain is on the cytoplasmic side. A helical membrane pass occupies residues 701 to 721 (LLLGLCCILMLCCIGLLIRIV). Topologically, residues 722–737 (TQNTENTPWMKNEGQS) are extracellular.

The protein belongs to the peptidase M2 family. In terms of assembly, interacts with IZUMO1. It depends on Zn(2+) as a cofactor. Expressed in sperm and testis (at protein level). Expressed in heart and testis. Not detected in kidney, lung, liver, brain, ovary, spleen and thymus.

It is found in the cytoplasmic vesicle. The protein resides in the secretory vesicle. Its subcellular location is the acrosome membrane. The protein is Angiotensin-converting enzyme-like protein Ace3 of Mus musculus (Mouse).